The chain runs to 326 residues: Thioredoxin reductase (326 aa).

Thr-40 to Gln-47 is a binding site for FAD. Residues Cys-141 and Cys-144 are joined by a disulfide bond. Asp-291–Ala-300 contacts FAD.

It belongs to the class-II pyridine nucleotide-disulfide oxidoreductase family. As to quaternary structure, homodimer. The cofactor is FAD.

Its subcellular location is the cytoplasm. The catalysed reaction is [thioredoxin]-dithiol + NADP(+) = [thioredoxin]-disulfide + NADPH + H(+). The polypeptide is Thioredoxin reductase (trxB) (Buchnera aphidicola subsp. Baizongia pistaciae (strain Bp)).